A 310-amino-acid chain; its full sequence is Methionyl-tRNA formyltransferase (310 aa).

111–114 contributes to the (6S)-5,6,7,8-tetrahydrofolate binding site; the sequence is SILP.

The protein belongs to the Fmt family.

The enzyme catalyses L-methionyl-tRNA(fMet) + (6R)-10-formyltetrahydrofolate = N-formyl-L-methionyl-tRNA(fMet) + (6S)-5,6,7,8-tetrahydrofolate + H(+). Attaches a formyl group to the free amino group of methionyl-tRNA(fMet). The formyl group appears to play a dual role in the initiator identity of N-formylmethionyl-tRNA by promoting its recognition by IF2 and preventing the misappropriation of this tRNA by the elongation apparatus. This chain is Methionyl-tRNA formyltransferase, found in Methylobacterium nodulans (strain LMG 21967 / CNCM I-2342 / ORS 2060).